A 261-amino-acid polypeptide reads, in one-letter code: uncharacterized protein (261 aa).

This sequence belongs to the FrhB family.

This is an uncharacterized protein from Methanocaldococcus jannaschii (strain ATCC 43067 / DSM 2661 / JAL-1 / JCM 10045 / NBRC 100440) (Methanococcus jannaschii).